The sequence spans 378 residues: Odorant receptor 45a (378 aa).

Over methionine 1–proline 30 the chain is Cytoplasmic. Residues isoleucine 31–alanine 51 traverse the membrane as a helical segment. Residues leucine 52–alanine 129 are Extracellular-facing. A helical membrane pass occupies residues alanine 130–valine 150. The Cytoplasmic segment spans residues glutamate 151–histidine 173. The helical transmembrane segment at phenylalanine 174–isoleucine 194 threads the bilayer. Topologically, residues alanine 195–aspartate 197 are extracellular. The chain crosses the membrane as a helical span at residues threonine 198–leucine 218. Residues glutamate 219–serine 249 lie on the Cytoplasmic side of the membrane. The chain crosses the membrane as a helical span at residues isoleucine 250–alanine 270. Residues phenylalanine 271 to arginine 285 are Extracellular-facing. Residues alanine 286–isoleucine 306 traverse the membrane as a helical segment. The Cytoplasmic segment spans residues lysine 307–glutamine 342. The chain crosses the membrane as a helical span at residues arginine 343–isoleucine 363. Over arginine 364 to arginine 378 the chain is Extracellular.

The protein belongs to the insect chemoreceptor superfamily. Heteromeric odorant receptor channel (TC 1.A.69) family. Or1a subfamily. In terms of assembly, interacts with Orco. Complexes exist early in the endomembrane system in olfactory sensory neurons (OSNs), coupling these complexes to the conserved ciliary trafficking pathway.

The protein resides in the cell membrane. Its function is as follows. Odorant receptor which mediates acceptance or avoidance behavior, depending on its substrates. The odorant receptor repertoire encodes a large collection of odor stimuli that vary widely in identity, intensity, and duration. May form a complex with Orco to form odorant-sensing units, providing sensitive and prolonged odorant signaling and calcium permeability. Involved in the behavioral responses to hexanol, pentyl acetate, benzyl acetate, and 2-heptanone. The chain is Odorant receptor 45a (Or45a) from Drosophila melanogaster (Fruit fly).